Reading from the N-terminus, the 20-residue chain is Toxin b subunit beta (20 aa).

In terms of assembly, toxin b is a heterodimer composed of toxin alpha and toxin beta. As to expression, expressed by the venom gland.

The protein localises to the secreted. Its function is as follows. Binds to sodium channels (Nav) and affects the channel activation process. In Androctonus crassicauda (Arabian fat-tailed scorpion), this protein is Toxin b subunit beta.